We begin with the raw amino-acid sequence, 200 residues long: Holliday junction branch migration complex subunit RuvA (200 aa).

Positions 1–64 (MITSIQGTLV…EDSQTLYGFA (64 aa)) are domain I. The domain II stretch occupies residues 65–144 (SPAERDFFRL…ATGAAPGLAT (80 aa)). Positions 145–151 (QPAAAAS) are flexible linker. Residues 152 to 200 (PGASAHRDAVAALVALGYRSADADEAVRRASLALGEAATTESLIKKALS) form a domain III region.

This sequence belongs to the RuvA family. In terms of assembly, homotetramer. Forms an RuvA(8)-RuvB(12)-Holliday junction (HJ) complex. HJ DNA is sandwiched between 2 RuvA tetramers; dsDNA enters through RuvA and exits via RuvB. An RuvB hexamer assembles on each DNA strand where it exits the tetramer. Each RuvB hexamer is contacted by two RuvA subunits (via domain III) on 2 adjacent RuvB subunits; this complex drives branch migration. In the full resolvosome a probable DNA-RuvA(4)-RuvB(12)-RuvC(2) complex forms which resolves the HJ.

It is found in the cytoplasm. In terms of biological role, the RuvA-RuvB-RuvC complex processes Holliday junction (HJ) DNA during genetic recombination and DNA repair, while the RuvA-RuvB complex plays an important role in the rescue of blocked DNA replication forks via replication fork reversal (RFR). RuvA specifically binds to HJ cruciform DNA, conferring on it an open structure. The RuvB hexamer acts as an ATP-dependent pump, pulling dsDNA into and through the RuvAB complex. HJ branch migration allows RuvC to scan DNA until it finds its consensus sequence, where it cleaves and resolves the cruciform DNA. This Opitutus terrae (strain DSM 11246 / JCM 15787 / PB90-1) protein is Holliday junction branch migration complex subunit RuvA.